Reading from the N-terminus, the 87-residue chain is Cell division protein FtsL (87 aa).

Residues 1–6 (MNKSNF) are Cytoplasmic-facing. A helical transmembrane segment spans residues 7 to 23 (FLLLAVCVSAFSVVMQQ). Topologically, residues 24 to 87 (NQYRLNFTAL…GNTFMVEHQR (64 aa)) are periplasmic. A coiled-coil region spans residues 31-71 (TALDKAKKQEIALEQDYAQMRLQQARLANHEAIRAAAEKQN). A disordered region spans residues 68 to 87 (EKQNLHPPVSGNTFMVEHQR).

This sequence belongs to the FtsL family. As to quaternary structure, part of a complex composed of FtsB, FtsL and FtsQ.

It is found in the cell inner membrane. Its function is as follows. Essential cell division protein. May link together the upstream cell division proteins, which are predominantly cytoplasmic, with the downstream cell division proteins, which are predominantly periplasmic. The polypeptide is Cell division protein FtsL (Neisseria gonorrhoeae (strain ATCC 700825 / FA 1090)).